The primary structure comprises 49 residues: Small ribosomal subunit protein eS31 (49 aa).

Zn(2+) is bound by residues cysteine 21, cysteine 24, cysteine 39, and cysteine 42. Residues 21-42 (CPRCGPGVFLADHKNRLACGKC) form a C4-type zinc finger.

It belongs to the eukaryotic ribosomal protein eS31 family. As to quaternary structure, part of the 30S ribosomal subunit. The cofactor is Zn(2+).

The chain is Small ribosomal subunit protein eS31 from Methanosarcina mazei (strain ATCC BAA-159 / DSM 3647 / Goe1 / Go1 / JCM 11833 / OCM 88) (Methanosarcina frisia).